The primary structure comprises 630 residues: Sodium-dependent serotonin transporter (630 aa).

Composition is skewed to polar residues over residues 1–11 (METTPLNSQKV) and 42–55 (QISNGYSAVPSTSA). Residues 1–63 (METTPLNSQK…SAGDEAPHST (63 aa)) form a disordered region. At 1-87 (METTPLNSQK…ERETWGKKMD (87 aa)) the chain is on the cytoplasmic side. At Y47 the chain carries Phosphotyrosine. Residues 88–112 (FLLSVIGYAVDLGNIWRFPYICYQN) traverse the membrane as a helical segment. Na(+) contacts are provided by G94, A96, V97, D98, and N101. D98 contacts serotonin. Over 113-115 (GGG) the chain is Extracellular. A helical membrane pass occupies residues 116–135 (AFLLPYTIMAIFGGIPLFYM). The Cytoplasmic segment spans residues 136 to 160 (ELALGQYHRNGCISIWKKICPIFKG). Phosphotyrosine is present on Y142. Residues 161-186 (IGYAICIIAFYIASYYNTIIAWALYY) form a helical membrane-spanning segment. Residues 187 to 252 (LISSFTDQLP…KGLQDLGTIS (66 aa)) lie on the Extracellular side of the membrane. C200 and C209 form a disulfide bridge. 2 N-linked (GlcNAc...) asparagine glycosylation sites follow: N208 and N217. The chain crosses the membrane as a helical span at residues 253 to 271 (WQLALCIMLIFTIIYFSIW). At 272-277 (KGVKTS) the chain is on the cytoplasmic side. A Phosphothreonine modification is found at T276. The helical transmembrane segment at 278–297 (GKVVWVTATFPYIVLSVLLV) threads the bilayer. Over 298–324 (RGATLPGAWRGVVFYLKPNWQKLLETG) the chain is Extracellular. Residues 325-347 (VWVDAAAQIFFSLGPGFGVLLAF) form a helical membrane-spanning segment. S336 is a Na(+) binding site. Topologically, residues 348-360 (ASYNKFNNNCYQD) are cytoplasmic. The chain crosses the membrane as a helical span at residues 361 to 380 (ALVTSVVNCMTSFVSGFVIF). Na(+) is bound at residue N368. The Extracellular portion of the chain corresponds to 381-421 (TVLGYMAEMRNEDVSEVAKDAGPSLLFITYAEAIANMPAST). A helical membrane pass occupies residues 422–443 (FFAIIFFLMLITLGLDSTFAGL). Na(+) contacts are provided by L434, D437, and S438. T439 provides a ligand contact to serotonin. Topologically, residues 444 to 463 (EGVITAVLDEFPHIWAKRRE) are cytoplasmic. Residues 464-483 (WFVLIVVITCILGSLLTLTS) form a helical membrane-spanning segment. The Extracellular portion of the chain corresponds to 484–494 (GGAYVVTLLEE). 2 residues coordinate serotonin: E494 and Y495. The chain crosses the membrane as a helical span at residues 495–516 (YATGPAVLTVALIEAVVVSWFY). At 517–538 (GITQFCSDVKEMLGFSPGWFWR) the chain is on the cytoplasmic side. A helical membrane pass occupies residues 539–558 (ICWVAISPLFLLFIICSFLM). Serotonin is bound by residues F556 and S559. Over 559–574 (SPPQLRLFQYNYPHWS) the chain is Extracellular. Residues 575 to 595 (IILGYCIGTSSVICIPIYIIY) form a helical membrane-spanning segment. At 596–630 (RLISTPGTLKERIIKSITPETPTEIPCGDIRMNAV) the chain is on the cytoplasmic side. The tract at residues 616 to 624 (TPTEIPCGD) is interaction with RAB4A.

Belongs to the sodium:neurotransmitter symporter (SNF) (TC 2.A.22) family. SLC6A4 subfamily. In terms of assembly, monomer or homooligomer. Interacts (via C-terminus) with SCAMP2; the interaction is direct and retains transporter molecules intracellularly. Interacts with filamentous actin and STX1A. Interacts (via the N-terminus) with STX1A (via the H3 domain); this interaction regulates SLC4A6 channel conductance. Interacts with SEC23A, SEC24C and PATJ. Interacts with NOS1; the interaction may diminish the cell surface localization of SERT in the brain and, correspondingly, reduce serotonin reuptake. Interacts with TGFB1I1. Interacts with ITGAV:ITGB3. Interacts (via C-terminus) with ITGB3; this interaction regulates SLC6A4 trafficking. Phosphorylation at Thr-276 increases 5-HT uptake and is required for cGMP-mediated SERT regulation. Expressed in the lung, midbrain and brainstem regions. Expressed in brainstem raphe neurons.

It is found in the cell membrane. The protein resides in the endomembrane system. It localises to the endosome membrane. The protein localises to the synapse. Its subcellular location is the cell junction. It is found in the focal adhesion. The protein resides in the cell projection. It localises to the neuron projection. It carries out the reaction serotonin(out) + K(+)(in) + Na(+)(out) + H(+)(in) = serotonin(in) + K(+)(out) + Na(+)(in) + H(+)(out). In terms of biological role, serotonin transporter that cotransports serotonin with one Na(+) ion in exchange for one K(+) ion and possibly one proton in an overall electroneutral transport cycle. Transports serotonin across the plasma membrane from the extracellular compartment to the cytosol thus limiting serotonin intercellular signaling. Essential for serotonin homeostasis in the central nervous system. In the developing somatosensory cortex, acts in glutamatergic neurons to control serotonin uptake and its trophic functions accounting for proper spatial organization of cortical neurons and elaboration of sensory circuits. In the mature cortex, acts primarily in brainstem raphe neurons to mediate serotonin uptake from the synaptic cleft back into the pre-synaptic terminal thus terminating serotonin signaling at the synapse. Modulates mucosal serotonin levels in the gastrointestinal tract through uptake and clearance of serotonin in enterocytes. Required for enteric neurogenesis and gastrointestinal reflexes. Regulates blood serotonin levels by ensuring rapid high affinity uptake of serotonin from plasma to platelets, where it is further stored in dense granules via vesicular monoamine transporters and then released upon stimulation. Mechanistically, the transport cycle starts with an outward-open conformation having Na1(+) and Cl(-) sites occupied. The binding of a second extracellular Na2(+) ion and serotonin substrate leads to structural changes to outward-occluded to inward-occluded to inward-open, where the Na2(+) ion and serotonin are released into the cytosol. Binding of intracellular K(+) ion induces conformational transitions to inward-occluded to outward-open and completes the cycle by releasing K(+) possibly together with a proton bound to Asp-98 into the extracellular compartment. Na1(+) and Cl(-) ions remain bound throughout the transport cycle. Additionally, displays serotonin-induced channel-like conductance for monovalent cations, mainly Na(+) ions. The channel activity is uncoupled from the transport cycle and may contribute to the membrane resting potential or excitability. In Mus musculus (Mouse), this protein is Sodium-dependent serotonin transporter.